An 864-amino-acid polypeptide reads, in one-letter code: MAEMEKEGRPPENKRSRKPAHPVKREINEEMKNFAENTMNELLGWYGYDKVELKDGEDIEFRSYTTDGESRQHISVLKENSLPKPKLPEDSVISSYNISTGYSGLATGNGLSDSPAGSKDHGNVPIIVPLIPPPFIKPPAEDEVSNVQIMCAWCQKVGIKRYSLSMGSEVKSFCSEKCFAACRRAYFKRNKARDEDGHAESFPQQHYAKETPRLAFKNNCELLVCDWCKHIRHTKEYLDFGDGERRLQFCSAKCLNQYKMDIFYKETQANLPAGLCGTLHPHMESKAEGTGVQLLTPDSWNIPLTDARRKAPSPVAAAGQSQGPGPSSSTTVSPSDTANCSVTKIPTPVPKSLPISETPSIPPVSVQPPASIGPPLGVPPRSPPMVMTNRGPVPLPIFMEQQIIQQIRPPFIRGPPHHASNPNSPLSNPMLPGIGPPPGGPRNLGPTSSPMHRPMLSPHIHPPSTPTMPGNPPGLLPPPPPGAPLPSLPFPPVSMMPNGPMPVPQMMNFGLPSLAPLVPPPTLLVPYPVIVPLPVPIPIPIPIPHVNDSKPPNGFSSNGESFVPSAPGDSSAAGGKAGGRSLSPRDSKQGSSKSADSPPGSSGQALSLAPSERGRGEVVDLTRRAASPAGAGGQPGFAGVLHGPQDGVIDLTVGHRARLHNVIHRALHAHVKAEREPGAAERRTCGGCRDGHCSPPAAGDPGPGAPAGPEAAAACNVIVNGTRSAPAEAKGAEPPPEQPPPPAPPKKLLSPEEPAVNELESVKENNCASNCHLDGEVTKKLMGEEALAGGDKSDPNLNNPADEDHAYALRMLPKTGCVIQPVPKPAEKAAMTPCVISSPMLSAGPEDLEPPLKRRCLRIRNQNK.

Residues 1–14 show a composition bias toward basic and acidic residues; sequence MAEMEKEGRPPENK. The interval 1–25 is disordered; the sequence is MAEMEKEGRPPENKRSRKPAHPVKR. FCS-type zinc fingers lie at residues 142–180 and 216–256; these read DEVSNVQIMCAWCQKVGIKRYSLSMGSEVKSFCSEKCFA and FKNN…KCLN. 3 disordered regions span residues 304–360, 413–484, and 550–616; these read LTDA…ETPS, RGPP…PGAP, and KPPN…RGRG. Low complexity-rich tracts occupy residues 314-335 and 417-433; these read PVAAAGQSQGPGPSSSTTVSPS and HHASNPNSPLSNPMLPG. Pro residues predominate over residues 460-484; that stretch reads IHPPSTPTMPGNPPGLLPPPPPGAP. Low complexity-rich tracts occupy residues 565-582 and 590-603; these read SAPGDSSAAGGKAGGRSL and GSSKSADSPPGSSG. Positions 618–622 match the SUMO interaction motif 1 (SIM); mediates the binding to polysumoylated substrates motif; the sequence is VVDLT. S627 is modified (phosphoserine). The SUMO interaction motif 2 (SIM); mediates the binding to polysumoylated substrates signature appears at 648-652; the sequence is VIDLT. K672 is covalently cross-linked (Glycyl lysine isopeptide (Lys-Gly) (interchain with G-Cter in SUMO2)). Phosphoserine is present on S694. The segment at 725–750 is disordered; that stretch reads APAEAKGAEPPPEQPPPPAPPKKLLS. A compositionally biased stretch (pro residues) spans 733–745; that stretch reads EPPPEQPPPPAPP.

Belongs to the SOBP family. In terms of assembly, interacts (via SIM domains) with SUMO1 and SUMO2.

Its function is as follows. Implicated in development of the cochlea. This Rattus norvegicus (Rat) protein is Sine oculis-binding protein homolog.